Reading from the N-terminus, the 237-residue chain is Probable GTP-binding protein EngB (237 aa).

The region spanning 13–188 (TGYEIAFAGR…ASVMAGRLNY (176 aa)) is the EngB-type G domain. Residues 21–28 (GRSNAGKS), 48–52 (GRTQM), 67–70 (DLPG), 134–137 (TKAD), and 167–169 (FSS) each bind GTP. The Mg(2+) site is built by S28 and T50. Residues 207-220 (DDLNDELMDQDETS) are compositionally biased toward acidic residues. The interval 207–237 (DDLNDELMDQDETSEFNTENIDDHLDQEPKI) is disordered. Basic and acidic residues predominate over residues 227–237 (IDDHLDQEPKI).

This sequence belongs to the TRAFAC class TrmE-Era-EngA-EngB-Septin-like GTPase superfamily. EngB GTPase family. It depends on Mg(2+) as a cofactor.

In terms of biological role, necessary for normal cell division and for the maintenance of normal septation. The protein is Probable GTP-binding protein EngB of Acinetobacter baylyi (strain ATCC 33305 / BD413 / ADP1).